Here is a 250-residue protein sequence, read N- to C-terminus: Ribosomal RNA small subunit methyltransferase J (250 aa).

S-adenosyl-L-methionine contacts are provided by residues 101-102 (RD), 117-118 (ER), 153-154 (SS), and aspartate 171.

The protein belongs to the methyltransferase superfamily. RsmJ family.

It is found in the cytoplasm. It catalyses the reaction guanosine(1516) in 16S rRNA + S-adenosyl-L-methionine = N(2)-methylguanosine(1516) in 16S rRNA + S-adenosyl-L-homocysteine + H(+). In terms of biological role, specifically methylates the guanosine in position 1516 of 16S rRNA. This chain is Ribosomal RNA small subunit methyltransferase J, found in Shigella dysenteriae serotype 1 (strain Sd197).